Here is a 375-residue protein sequence, read N- to C-terminus: Cytochrome P450 monooxygenase ACRTS1 (375 aa).

Heme is bound at residue C321.

It belongs to the cytochrome P450 family. The cofactor is heme.

It participates in mycotoxin biosynthesis. In terms of biological role, cytochrome P450 monooxygenase; part of the gene cluster that mediates the biosynthesis of the host-selective toxins (HSTs) ACR-toxins responsible for brown spot of rough lemon disease by the rough lemon pathotype. ACR-toxins cause uncoupling of mitochondrial oxidative-phosphorylation similar to that of classic protonophore. The structure of the major form of ACR-toxin (ACR-toxin I) consists of an alpha-dihydropyrone ring in a 19-carbon polyalcohol, a typical polyketide structure. Minor toxins were characterized as having a pyrone ring with polyalcohol side chains different in length and showing weaker toxicity. The highly reducing polyketide synthase ACRTS2 has all necessary enzymatic domains for multiple cycles of condensation and beta-keto processing. The cytochrome P450 monooxygenase ACRTS1 has also been shown to be essential for ACR-toxin biosynthesis, however its exact role in the pathway has not been elucidated yet. The protein is Cytochrome P450 monooxygenase ACRTS1 of Alternaria alternata (Alternaria rot fungus).